The sequence spans 325 residues: Chain length determinant protein (325 aa).

Residues 1–31 (MRVENNNVSGQNHDPEQIDLIDLLVQLWRGK) lie on the Cytoplasmic side of the membrane. Residues 32 to 52 (MTIIISVIVAIALAIGYLAVA) traverse the membrane as a helical segment. Over 53–294 (KEKWTSTAIV…LPIRRDSPKK (242 aa)) the chain is Periplasmic. A helical membrane pass occupies residues 295–315 (AITLILAVLLGGMVGAGIVLG). Residues 316–325 (RNALRNYNAK) lie on the Cytoplasmic side of the membrane.

It belongs to the WzzB/Cld/Rol family.

The protein localises to the cell inner membrane. Its pathway is bacterial outer membrane biogenesis; lipopolysaccharide biosynthesis. In terms of biological role, confers a modal distribution of chain length on the O-antigen component of lipopolysaccharide (LPS). Gives rise to a reduced number of short chain molecules and increases in numbers of longer molecules. This is Chain length determinant protein (wzzB) from Shigella dysenteriae.